A 394-amino-acid chain; its full sequence is NAD(P)H-quinone oxidoreductase subunit H (394 aa).

This sequence belongs to the complex I 49 kDa subunit family. NDH-1 can be composed of about 15 different subunits; different subcomplexes with different compositions have been identified which probably have different functions. The initiator methionine has been seen to be kept and removed.

The protein localises to the cellular thylakoid membrane. The enzyme catalyses a plastoquinone + NADH + (n+1) H(+)(in) = a plastoquinol + NAD(+) + n H(+)(out). The catalysed reaction is a plastoquinone + NADPH + (n+1) H(+)(in) = a plastoquinol + NADP(+) + n H(+)(out). Its function is as follows. NDH-1 shuttles electrons from an unknown electron donor, via FMN and iron-sulfur (Fe-S) centers, to quinones in the respiratory and/or the photosynthetic chain. The immediate electron acceptor for the enzyme in this species is believed to be plastoquinone. Couples the redox reaction to proton translocation, and thus conserves the redox energy in a proton gradient. Cyanobacterial NDH-1 also plays a role in inorganic carbon-concentration. This chain is NAD(P)H-quinone oxidoreductase subunit H (ndhH), found in Synechocystis sp. (strain ATCC 27184 / PCC 6803 / Kazusa).